The sequence spans 230 residues: CRP-like protein Clp (230 aa).

An a nucleoside 3',5'-cyclic phosphate-binding site is contributed by 18–139; sequence PSLALDAGTI…APKILYAIGV (122 aa). Residues 158 to 230 form the HTH crp-type domain; it reads LDVTDRIVRT…GKTVVLYGTR (73 aa). Residues 190-209 constitute a DNA-binding region (H-T-H motif); that stretch reads RQELARLVGCSREMAGRVLK.

Homodimer.

It localises to the cytoplasm. Allosterically inhibited by cyclic di-GMP (c-di-GMP), which binds to Clp and abolishes its ability to bind its target gene promoter. Global transcriptional regulator that regulates virulence factors production by activating or repressing the expression of a large set of genes in diffusible signal factor (DSF) pathway. This is CRP-like protein Clp (clp) from Xanthomonas axonopodis pv. citri (strain 306).